The chain runs to 753 residues: 5-methyltetrahydropteroyltriglutamate--homocysteine methyltransferase (753 aa).

5-methyltetrahydropteroyltri-L-glutamate-binding positions include 17–20 and K117; that span reads RELK. Residues 431–433 and E484 each bind L-homocysteine; that span reads IGS. L-methionine-binding positions include 431–433 and E484; that span reads IGS. 5-methyltetrahydropteroyltri-L-glutamate-binding positions include 515 to 516 and W561; that span reads RC. Position 599 (D599) interacts with L-homocysteine. D599 lines the L-methionine pocket. 5-methyltetrahydropteroyltri-L-glutamate is bound at residue E605. 3 residues coordinate Zn(2+): H641, C643, and E665. H694 acts as the Proton donor in catalysis. C726 provides a ligand contact to Zn(2+).

Belongs to the vitamin-B12 independent methionine synthase family. Zn(2+) serves as cofactor.

The catalysed reaction is 5-methyltetrahydropteroyltri-L-glutamate + L-homocysteine = tetrahydropteroyltri-L-glutamate + L-methionine. The protein operates within amino-acid biosynthesis; L-methionine biosynthesis via de novo pathway; L-methionine from L-homocysteine (MetE route): step 1/1. Its function is as follows. Catalyzes the transfer of a methyl group from 5-methyltetrahydrofolate to homocysteine resulting in methionine formation. The polypeptide is 5-methyltetrahydropteroyltriglutamate--homocysteine methyltransferase (Escherichia coli O1:K1 / APEC).